We begin with the raw amino-acid sequence, 425 residues long: Serine--tRNA ligase (425 aa).

L-serine is bound at residue Thr-231–Glu-233. ATP-binding positions include Arg-262–Glu-264 and Val-278. Position 285 (Glu-285) interacts with L-serine. Residue Glu-349–Ser-352 participates in ATP binding. Thr-384 contacts L-serine.

Belongs to the class-II aminoacyl-tRNA synthetase family. Type-1 seryl-tRNA synthetase subfamily. As to quaternary structure, homodimer. The tRNA molecule binds across the dimer.

The protein resides in the cytoplasm. It catalyses the reaction tRNA(Ser) + L-serine + ATP = L-seryl-tRNA(Ser) + AMP + diphosphate + H(+). The catalysed reaction is tRNA(Sec) + L-serine + ATP = L-seryl-tRNA(Sec) + AMP + diphosphate + H(+). The protein operates within aminoacyl-tRNA biosynthesis; selenocysteinyl-tRNA(Sec) biosynthesis; L-seryl-tRNA(Sec) from L-serine and tRNA(Sec): step 1/1. Its function is as follows. Catalyzes the attachment of serine to tRNA(Ser). Is also able to aminoacylate tRNA(Sec) with serine, to form the misacylated tRNA L-seryl-tRNA(Sec), which will be further converted into selenocysteinyl-tRNA(Sec). In Dictyoglomus turgidum (strain DSM 6724 / Z-1310), this protein is Serine--tRNA ligase.